The primary structure comprises 247 residues: Ribosomal RNA large subunit methyltransferase E (247 aa).

The segment at 1 to 21 (MKKTTKKTAGGYGGSGSHKLY) is disordered. Residues G88, W90, D111, D127, and D151 each coordinate S-adenosyl-L-methionine. K191 serves as the catalytic Proton acceptor.

The protein belongs to the class I-like SAM-binding methyltransferase superfamily. RNA methyltransferase RlmE family.

It localises to the cytoplasm. It catalyses the reaction uridine(2552) in 23S rRNA + S-adenosyl-L-methionine = 2'-O-methyluridine(2552) in 23S rRNA + S-adenosyl-L-homocysteine + H(+). Its function is as follows. Specifically methylates the uridine in position 2552 of 23S rRNA at the 2'-O position of the ribose in the fully assembled 50S ribosomal subunit. The sequence is that of Ribosomal RNA large subunit methyltransferase E from Bartonella henselae (strain ATCC 49882 / DSM 28221 / CCUG 30454 / Houston 1) (Rochalimaea henselae).